The chain runs to 431 residues: Glutamate-1-semialdehyde 2,1-aminomutase (431 aa).

Lys269 bears the N6-(pyridoxal phosphate)lysine mark.

The protein belongs to the class-III pyridoxal-phosphate-dependent aminotransferase family. HemL subfamily. In terms of assembly, homodimer. It depends on pyridoxal 5'-phosphate as a cofactor.

It localises to the cytoplasm. The enzyme catalyses (S)-4-amino-5-oxopentanoate = 5-aminolevulinate. The protein operates within porphyrin-containing compound metabolism; protoporphyrin-IX biosynthesis; 5-aminolevulinate from L-glutamyl-tRNA(Glu): step 2/2. Its pathway is porphyrin-containing compound metabolism; chlorophyll biosynthesis. The sequence is that of Glutamate-1-semialdehyde 2,1-aminomutase from Chlorobium phaeobacteroides (strain BS1).